Here is a 341-residue protein sequence, read N- to C-terminus: N-acetyl-gamma-glutamyl-phosphate reductase (341 aa).

Residue C147 is part of the active site.

It belongs to the NAGSA dehydrogenase family. Type 1 subfamily.

It is found in the cytoplasm. The catalysed reaction is N-acetyl-L-glutamate 5-semialdehyde + phosphate + NADP(+) = N-acetyl-L-glutamyl 5-phosphate + NADPH + H(+). Its pathway is amino-acid biosynthesis; L-arginine biosynthesis; N(2)-acetyl-L-ornithine from L-glutamate: step 3/4. In terms of biological role, catalyzes the NADPH-dependent reduction of N-acetyl-5-glutamyl phosphate to yield N-acetyl-L-glutamate 5-semialdehyde. The polypeptide is N-acetyl-gamma-glutamyl-phosphate reductase (Dehalococcoides mccartyi (strain ATCC BAA-2266 / KCTC 15142 / 195) (Dehalococcoides ethenogenes (strain 195))).